Consider the following 195-residue polypeptide: Small ribosomal subunit protein uS4c (195 aa).

An S4 RNA-binding domain is found at 82–143; it reads MRLDNILFRL…KQRSKALIQN (62 aa).

The protein belongs to the universal ribosomal protein uS4 family. Part of the 30S ribosomal subunit. Contacts protein S5. The interaction surface between S4 and S5 is involved in control of translational fidelity.

The protein localises to the plastid. It is found in the chloroplast. Functionally, one of the primary rRNA binding proteins, it binds directly to 16S rRNA where it nucleates assembly of the body of the 30S subunit. Its function is as follows. With S5 and S12 plays an important role in translational accuracy. This is Small ribosomal subunit protein uS4c (rps4) from Gladiolus murielae (Abyssinian gladiolus).